We begin with the raw amino-acid sequence, 338 residues long: D-erythrose-4-phosphate dehydrogenase (338 aa).

Residue 11–12 participates in NAD(+) binding; the sequence is RI. Residues 153–155, Arg199, 212–213, and Arg235 contribute to the substrate site; these read SCT and TK. Cys154 functions as the Nucleophile in the catalytic mechanism. Asn317 is a binding site for NAD(+).

It belongs to the glyceraldehyde-3-phosphate dehydrogenase family. Epd subfamily. Homotetramer.

The protein resides in the cytoplasm. It carries out the reaction D-erythrose 4-phosphate + NAD(+) + H2O = 4-phospho-D-erythronate + NADH + 2 H(+). Its pathway is cofactor biosynthesis; pyridoxine 5'-phosphate biosynthesis; pyridoxine 5'-phosphate from D-erythrose 4-phosphate: step 1/5. In terms of biological role, catalyzes the NAD-dependent conversion of D-erythrose 4-phosphate to 4-phosphoerythronate. This chain is D-erythrose-4-phosphate dehydrogenase, found in Shewanella amazonensis (strain ATCC BAA-1098 / SB2B).